The chain runs to 598 residues: Aspartate--tRNA ligase (598 aa).

Glu-175 is an L-aspartate binding site. The tract at residues 199–202 is aspartate; that stretch reads QLFK. Residue Arg-221 participates in L-aspartate binding. Residues 221–223 and Gln-230 each bind ATP; that span reads RDE. His-450 is a binding site for L-aspartate. Glu-486 contributes to the ATP binding site. Arg-493 serves as a coordination point for L-aspartate. 538 to 541 is an ATP binding site; that stretch reads GLDR.

The protein belongs to the class-II aminoacyl-tRNA synthetase family. Type 1 subfamily. In terms of assembly, homodimer.

It localises to the cytoplasm. The catalysed reaction is tRNA(Asp) + L-aspartate + ATP = L-aspartyl-tRNA(Asp) + AMP + diphosphate. Functionally, catalyzes the attachment of L-aspartate to tRNA(Asp) in a two-step reaction: L-aspartate is first activated by ATP to form Asp-AMP and then transferred to the acceptor end of tRNA(Asp). The polypeptide is Aspartate--tRNA ligase (Lactiplantibacillus plantarum (strain ATCC BAA-793 / NCIMB 8826 / WCFS1) (Lactobacillus plantarum)).